Here is an 82-residue protein sequence, read N- to C-terminus: Small ribosomal subunit protein bS16 (82 aa).

Belongs to the bacterial ribosomal protein bS16 family.

The sequence is that of Small ribosomal subunit protein bS16 from Klebsiella pneumoniae subsp. pneumoniae (strain ATCC 700721 / MGH 78578).